The primary structure comprises 477 residues: MMMGNTFGSSLASLFFLWATIQQIFPNHLRIAIKEFLISTIQQLSFVQRFSDRFINFFSPYVEISFSQYEDYQFNHAFAAIETYLGAKATDKAKHLRASQVKESKGLVLKRDETKVRDEYEGGTVWWEMETDSTGYRTFKLTFHRRSRDIVTDSYIKYVFEEGKSIQAKSKQMKLFTNNPSSHWGTSKKSFWRYIDFEHPASFHTLAMDTKKKEEILNDLAAFSNGKEYYKKIGKAWKRGYLLHGPPGTGKSTMIAAMANHLNYSIYDLELTAIRNNSELRKLLTATSSKSIIVIEDIDCSLDLTGKRKKEKNLMTSREDGEQGTEEDKSFVTLSGLLNFIDGIWSACGQERIIIFTTNHFEKLDPALIRRGRMDMHIELSYCSFEAFKILAKNYLDLDTHPLFKKIESLLKETKIAPADVAENLMKKNTEIDADGSLKDLIQALEGKKKIHGAQVDEPKDKYTKKFYKAFCMSSKA.

A signal peptide spans 1–26 (MMMGNTFGSSLASLFFLWATIQQIFP). 245-252 (GPPGTGKS) contributes to the ATP binding site.

The protein belongs to the AAA ATPase family. BCS1 subfamily. The cofactor is Mg(2+).

The catalysed reaction is ATP + H2O = ADP + phosphate + H(+). This is AAA-ATPase At3g28600 from Arabidopsis thaliana (Mouse-ear cress).